Reading from the N-terminus, the 120-residue chain is UPF0102 protein CBU_1742 (120 aa).

Belongs to the UPF0102 family.

This Coxiella burnetii (strain RSA 493 / Nine Mile phase I) protein is UPF0102 protein CBU_1742.